We begin with the raw amino-acid sequence, 1406 residues long: Protein FAM135B (1406 aa).

2 disordered regions span residues 519–548 and 770–820; these read WTGQ…DGQA and SVSA…GDSG. Residues Ser-777 and Ser-778 each carry the phosphoserine modification. Over residues 804-816 the composition is skewed to polar residues; that stretch reads KSQGSPGSCSQLC.

It belongs to the FAM135 family.

This chain is Protein FAM135B (FAM135B), found in Homo sapiens (Human).